Here is a 342-residue protein sequence, read N- to C-terminus: S-adenosylmethionine:tRNA ribosyltransferase-isomerase (342 aa).

It belongs to the QueA family. Monomer.

It is found in the cytoplasm. The enzyme catalyses 7-aminomethyl-7-carbaguanosine(34) in tRNA + S-adenosyl-L-methionine = epoxyqueuosine(34) in tRNA + adenine + L-methionine + 2 H(+). The protein operates within tRNA modification; tRNA-queuosine biosynthesis. Functionally, transfers and isomerizes the ribose moiety from AdoMet to the 7-aminomethyl group of 7-deazaguanine (preQ1-tRNA) to give epoxyqueuosine (oQ-tRNA). The protein is S-adenosylmethionine:tRNA ribosyltransferase-isomerase of Listeria monocytogenes serotype 4a (strain HCC23).